The sequence spans 988 residues: MEQSRSQQRGGEQSWWGSDPQYQYMPFEHCTSYGLPSENGGLQHRLRKDAGPRHNVHPTQIYGHHKEQFSDREQDIGMPKKTGSSSTVDSKDEDHYSKCQDCIHRLGQVVRRKLGEDGIFLVLLGLLMALVSWSMDYVSAKSLQAYKWSYAQMQPSLPLQFLVWVTFPLVLILFSALFCHLISPQAVGSGIPEMKTILRGVVLKEYLTMKAFVAKVVALTAGLGSGIPVGKEGPFVHIASICAAVLSKFMSVFCGVYEQPYYYSDILTVGCAVGVGCCFGTPLGGVLFSIEVTSTYFAVRNYWRGFFAATFSAFVFRVLAVWNKDAVTITALFRTNFRMDFPFDLKELPAFAAIGICCGLLGAVFVYLHRQVMLGVRKHKALSQFLAKHRLLYPGIVTFVIASFTFPPGMGQFMAGELMPREAISTLFDNNTWVKHAGDPESLGQSAVWIHPRVNVVIIIFLFFVMKFWMSIVATTMPIPCGGFMPVFVLGAAFGRLVGEIMAMLFPDGILFDDIIYKILPGGYAVIGAAALTGAVSHTVSTAVICFELTGQIAHILPMMVAVILANMVAQSLQPSLYDSIIQVKKLPYLPDLGWNQLSKYTIFVEDIMVRDVKFVSASYTYGELRTLLQTTTVKTLPLVDSKDSMILLGSVERSELQALLQRHLCPERRLRAAQEMARKLSELPYDGKARLAGEGLPGAPPGRPESFAFVDEDEDEDLSGKSELPPSLALHPSTTAPLSPEEPNGPLPGHKQQPEAPEPAGQRPSIFQSLLHCLLGRARPTKKKTTQDSTDLVDNMSPEEIEAWEQEQLSQPVCFDSCCIDQSPFQLVEQTTLHKTHTLFSLLGLHLAYVTSMGKLRGVLALEELQKAIEGHTKSGVQLRPPLASFRNTTSTRKSTGAPPSSAENWNLPEDRPGATGTGDVIAASPETPVPSPSPEPPLSLAPGKVEGELEELELVESPGLEEELADILQGPSLRSTDEEDEDELIL.

Over Met-1 to Gly-118 the chain is Cytoplasmic. Basic and acidic residues predominate over residues His-65–Asp-75. The disordered stretch occupies residues His-65–Asp-92. The chain crosses the membrane as a helical span at residues Ile-119–Tyr-150. The Extracellular segment spans residues Ala-151–Pro-158. The helical transmembrane segment at Leu-159–Cys-179 threads the bilayer. The Cytoplasmic segment spans residues His-180–Ser-183. An intramembrane region (note=Loop between two helices) is located at residues Pro-184–Ser-189. The Selectivity filter part_1 signature appears at Gly-188–Pro-192. Ser-189 contributes to the chloride binding site. Positions Gly-190–Lys-195 form an intramembrane region, helical. At Thr-196 to Thr-208 the chain is on the cytoplasmic side. The helical intramembrane region spans Met-209 to Gly-224. An intramembrane region (note=Loop between two helices) is located at residues Ser-225–Gly-230. Positions Gly-230–Pro-234 match the Selectivity filter part_2 motif. An intramembrane region (helical) is located at residues Lys-231–Leu-246. Topologically, residues Ser-247–Thr-268 are cytoplasmic. 2 intramembrane regions (helical) span residues Val-269–Gly-280 and Thr-281–Ile-290. The Cytoplasmic portion of the chain corresponds to Glu-291 to Asn-301. A helical transmembrane segment spans residues Tyr-302 to Val-321. Over Trp-322 to Glu-347 the chain is Extracellular. Residues Leu-348–Val-376 form a helical membrane-spanning segment. Over Arg-377 to Arg-390 the chain is Cytoplasmic. The helical transmembrane segment at Leu-391–Pro-408 threads the bilayer. The Extracellular portion of the chain corresponds to Gly-409–Met-414. The note=Loop between two helices intramembrane region spans Ala-415–Leu-418. An intramembrane region (helical) is located at residues Met-419 to Thr-426. Residues Leu-427–Val-457 are Extracellular-facing. An intramembrane region (helical) is located at residues Ile-458–Thr-475. Residues Thr-476–Gly-482 constitute an intramembrane region (note=Loop between two helices). A Selectivity filter part_3 motif is present at residues Gly-482–Pro-486. The helical intramembrane region spans Gly-483–Val-498. Phe-484 provides a ligand contact to chloride. Residues Gly-499–Pro-521 are Extracellular-facing. Residues Gly-522–His-538 constitute an intramembrane region (helical). Residues Thr-539–Val-540 constitute an intramembrane region (note=Loop between two helices). Positions Ser-541 to Ala-554 form an intramembrane region, helical. The Extracellular segment spans residues His-555 to Leu-557. Positions Pro-558 to Gln-571 form an intramembrane region, helical. Positions Ser-572–Pro-575 form an intramembrane region, note=Loop between two helices. An intramembrane region (helical) is located at residues Ser-576–Tyr-578. Position 578 (Tyr-578) interacts with chloride. Over Asp-579–Leu-988 the chain is Cytoplasmic. The 60-residue stretch at Met-609 to Glu-668 folds into the CBS 1 domain. Positions Glu-713–Arg-764 are disordered. The 56-residue stretch at Ile-821 to Ser-876 folds into the CBS 2 domain. Residues Leu-880–Leu-988 are disordered. Phosphoserine is present on Ser-886. Residues Phe-887 to Asn-906 show a composition bias toward polar residues. Residues Thr-929–Ser-941 show a composition bias toward pro residues. Acidic residues-rich tracts occupy residues Glu-950–Ala-967 and Asp-979–Leu-988.

Belongs to the chloride channel (TC 2.A.49) family. ClC-1/CLCN1 subfamily. As to quaternary structure, homodimer. In terms of tissue distribution, predominantly expressed in skeletal muscles.

The protein resides in the cell membrane. It is found in the sarcolemma. The protein localises to the T-tubule. The enzyme catalyses chloride(in) = chloride(out). The catalysed reaction is thiocyanate(in) = thiocyanate(out). It carries out the reaction bromide(in) = bromide(out). It catalyses the reaction nitrate(in) = nitrate(out). The enzyme catalyses iodide(out) = iodide(in). Its activity is regulated as follows. Modulated by membrane voltage with depolarization favouring channel opening and hyperpolarization favouring channel closure. Inhibited by acidic pH and ATP binding due to a shift of voltage dependence of common gating to more positive voltages. Inhibited by 9-anthracene-carboxylic. In terms of biological role, voltage-gated chloride channel involved in skeletal muscle excitability. Generates most of the plasma membrane chloride conductance in skeletal muscle fibers, stabilizes the resting membrane potential and contributes to the repolarization phase during action potential firing. Forms a homodimeric channel where each subunit has its own ion conduction pathway. Conducts double-barreled currents controlled by two types of gates, two fast glutamate gates that control each subunit independently and a slow common gate that opens and shuts off both subunits simultaneously. Has a significant open probability at muscle resting potential and is further activated upon membrane depolarization. Permeable to small monovalent anions with ion selectivity for chloride &gt; thiocyanate &gt; bromide &gt; nitrate &gt; iodide. This Homo sapiens (Human) protein is Chloride channel protein 1.